Here is a 608-residue protein sequence, read N- to C-terminus: Elongation factor 4 (608 aa).

The 183-residue stretch at 11–193 (SKIRNFSIIA…QIVEKVPAPD (183 aa)) folds into the tr-type G domain. Residues 23–28 (DHGKST) and 140–143 (NKID) contribute to the GTP site.

The protein belongs to the TRAFAC class translation factor GTPase superfamily. Classic translation factor GTPase family. LepA subfamily.

The protein localises to the cell membrane. The enzyme catalyses GTP + H2O = GDP + phosphate + H(+). Its function is as follows. Required for accurate and efficient protein synthesis under certain stress conditions. May act as a fidelity factor of the translation reaction, by catalyzing a one-codon backward translocation of tRNAs on improperly translocated ribosomes. Back-translocation proceeds from a post-translocation (POST) complex to a pre-translocation (PRE) complex, thus giving elongation factor G a second chance to translocate the tRNAs correctly. Binds to ribosomes in a GTP-dependent manner. The polypeptide is Elongation factor 4 (Bacillus cytotoxicus (strain DSM 22905 / CIP 110041 / 391-98 / NVH 391-98)).